The chain runs to 96 residues: Co-chaperonin GroES (96 aa).

It belongs to the GroES chaperonin family. In terms of assembly, heptamer of 7 subunits arranged in a ring. Interacts with the chaperonin GroEL.

The protein resides in the cytoplasm. Its function is as follows. Together with the chaperonin GroEL, plays an essential role in assisting protein folding. The GroEL-GroES system forms a nano-cage that allows encapsulation of the non-native substrate proteins and provides a physical environment optimized to promote and accelerate protein folding. GroES binds to the apical surface of the GroEL ring, thereby capping the opening of the GroEL channel. This is Co-chaperonin GroES from Shewanella halifaxensis (strain HAW-EB4).